The chain runs to 332 residues: Malate dehydrogenase, cytoplasmic (332 aa).

NAD(+)-binding positions include 11-17 and Asp-42; that span reads GAAGQIA. The substrate site is built by Arg-92 and Arg-98. Residues Asn-105, Gln-112, and 129-131 contribute to the NAD(+) site; that span reads VGN. The substrate site is built by Asn-131 and Arg-162. His-187 (proton acceptor) is an active-site residue.

It belongs to the LDH/MDH superfamily. MDH type 2 family. As to quaternary structure, homodimer.

It localises to the cytoplasm. It catalyses the reaction (S)-malate + NAD(+) = oxaloacetate + NADH + H(+). By arsenate for both the forward and reverse reactions. Malate dehydrogenase. Has no activity with NADPH as substrate. Does not show lactate dehydrogenase activity. This chain is Malate dehydrogenase, cytoplasmic, found in Taenia solium (Pork tapeworm).